The sequence spans 281 residues: NH(3)-dependent NAD(+) synthetase (281 aa).

24–31 is a binding site for ATP; sequence GVSGGVDS. Aspartate 30 contacts Mg(2+). Residue arginine 145 participates in deamido-NAD(+) binding. Position 165 (threonine 165) interacts with ATP. Glutamate 170 is a binding site for Mg(2+). Positions 178 and 185 each coordinate deamido-NAD(+). The ATP site is built by lysine 194 and serine 216.

Belongs to the NAD synthetase family. Homodimer.

The enzyme catalyses deamido-NAD(+) + NH4(+) + ATP = AMP + diphosphate + NAD(+) + H(+). It participates in cofactor biosynthesis; NAD(+) biosynthesis; NAD(+) from deamido-NAD(+) (ammonia route): step 1/1. Functionally, catalyzes the ATP-dependent amidation of deamido-NAD to form NAD. Uses ammonia as a nitrogen source. The chain is NH(3)-dependent NAD(+) synthetase (nadE1) from Thermotoga maritima (strain ATCC 43589 / DSM 3109 / JCM 10099 / NBRC 100826 / MSB8).